Consider the following 76-residue polypeptide: Esculentin-2SN1 (76 aa).

The N-terminal stretch at 1 to 22 is a signal peptide; that stretch reads MFTMKKSLLFLFFLGTISLSLC. Positions 23–37 are excised as a propeptide; sequence EQERGADEDDGGEEV. C70 and C76 form a disulfide bridge.

The protein belongs to the frog skin active peptide (FSAP) family. Esculentin subfamily. Expressed by the skin glands.

Its subcellular location is the secreted. In terms of biological role, antimicrobial peptide. Active against some Gram-negative and a variety of Gram-positive bacterial strains. Not active against fungi. Shows very weak hemolytic activity against human erythrocytes. This Sylvirana spinulosa (Fine-spined frog) protein is Esculentin-2SN1.